A 376-amino-acid chain; its full sequence is Chaperone protein DnaJ (376 aa).

The region spanning 5–70 (DYYEILGVSK…QKRAAYDQYG (66 aa)) is the J domain. The CR-type zinc-finger motif lies at 131 to 209 (GVTKEIRIPT…CHGHGRVERS (79 aa)). Cys144, Cys147, Cys161, Cys164, Cys183, Cys186, Cys197, and Cys200 together coordinate Zn(2+). CXXCXGXG motif repeat units lie at residues 144-151 (CDVCHGSG), 161-168 (CPTCHGSG), 183-190 (CPHCQGRG), and 197-204 (CNKCHGHG).

It belongs to the DnaJ family. As to quaternary structure, homodimer. It depends on Zn(2+) as a cofactor.

The protein localises to the cytoplasm. Participates actively in the response to hyperosmotic and heat shock by preventing the aggregation of stress-denatured proteins and by disaggregating proteins, also in an autonomous, DnaK-independent fashion. Unfolded proteins bind initially to DnaJ; upon interaction with the DnaJ-bound protein, DnaK hydrolyzes its bound ATP, resulting in the formation of a stable complex. GrpE releases ADP from DnaK; ATP binding to DnaK triggers the release of the substrate protein, thus completing the reaction cycle. Several rounds of ATP-dependent interactions between DnaJ, DnaK and GrpE are required for fully efficient folding. Also involved, together with DnaK and GrpE, in the DNA replication of plasmids through activation of initiation proteins. This is Chaperone protein DnaJ from Shigella flexneri serotype 5b (strain 8401).